A 205-amino-acid chain; its full sequence is High frequency lysogenization protein HflD homolog (205 aa).

It belongs to the HflD family.

It localises to the cytoplasm. It is found in the cell inner membrane. This chain is High frequency lysogenization protein HflD homolog, found in Haemophilus influenzae (strain ATCC 51907 / DSM 11121 / KW20 / Rd).